Reading from the N-terminus, the 417-residue chain is WD repeat and FYVE domain-containing protein 2 (417 aa).

WD repeat units lie at residues 29–68, 119–157, 202–241, and 245–284; these read GHVARINDVILLSKDEGVWTASDDRSVRLYLKRDNDQFWP, CHAGPISGLGFALSSELIFSCSRDKSIVWHCSENSNKVG, AHTNSITSLTWDGNKKVLYSGSSDHLIIMWDIGGGKGEAY, and GHNGKVTTLCAAPAAKRLFSADEHGKLMCWDMDVRRVETP. The FYVE-type zinc-finger motif lies at 286 to 357; that stretch reads WKTSDCCQKC…ICNDCAGRMK (72 aa). Zn(2+) contacts are provided by cysteine 292, cysteine 295, cysteine 319, cysteine 322, cysteine 327, cysteine 330, cysteine 349, and cysteine 352. The stretch at 373 to 412 is one WD 5 repeat; it reads EIRTGITAMHLQETLGLLVTSGQNRVVMIWDVRSVCSAPS.

Its function is as follows. Plays a role in coelomocyte endocytosis. This Caenorhabditis briggsae protein is WD repeat and FYVE domain-containing protein 2.